Reading from the N-terminus, the 605-residue chain is Condensin-2 complex subunit H2 (605 aa).

A Phosphothreonine modification is found at threonine 19. Phosphoserine occurs at positions 95, 200, 208, 228, and 232. A disordered region spans residues 194-331 (LEPEGMSPME…PFDSLESKPF (138 aa)). The segment covering 256 to 266 (GEDEDAEEAVE) has biased composition (acidic residues). Residues serine 282, serine 284, serine 466, and serine 492 each carry the phosphoserine modification.

Belongs to the CND2 H2 (condensin-2 subunit 2) family. In terms of assembly, component of the condensin-2 complex, which contains the SMC2 and SMC4 heterodimer, and three non SMC subunits, NCAPG2, NCAPH2 and NCAPD3 that probably regulate the complex.

It is found in the nucleus. The protein resides in the chromosome. Its function is as follows. Regulatory subunit of the condensin-2 complex, a complex that seems to provide chromosomes with an additional level of organization and rigidity and in establishing mitotic chromosome architecture. May promote the resolution of double-strand DNA catenanes (intertwines) between sister chromatids. Condensin-mediated compaction likely increases tension in catenated sister chromatids, providing directionality for type II topoisomerase-mediated strand exchanges toward chromatid decatenation. Required for decatenation of chromatin bridges at anaphase. Early in neurogenesis, may play an essential role to ensure accurate mitotic chromosome condensation in neuron stem cells, ultimately affecting neuron pool and cortex size. Seems to have lineage-specific role in T-cell development. The polypeptide is Condensin-2 complex subunit H2 (NCAPH2) (Homo sapiens (Human)).